Consider the following 743-residue polypeptide: Cytosolic endo-beta-N-acetylglucosaminidase (743 aa).

Met-1 is subject to N-acetylmethionine. Low complexity predominate over residues 1–11; that stretch reads MEAAAVTVTRS. Positions 1-55 are disordered; sequence MEAAAVTVTRSATRRRRRQLQGLAAPEAGTQEEQEDQEPRPRRRRPGRSIKDEEE. Ser-66 is subject to Phosphoserine. The region spanning 291 to 383 is the BRCT domain; that stretch reads RVFFDSCDGF…DFFQNQDKFW (93 aa).

Belongs to the glycosyl hydrolase 85 family. As to expression, widely expressed. Expressed at higher level in thymus and spleen.

The protein resides in the cytoplasm. The protein localises to the cytosol. It catalyses the reaction an N(4)-(oligosaccharide-(1-&gt;3)-[oligosaccharide-(1-&gt;6)]-beta-D-Man-(1-&gt;4)-beta-D-GlcNAc-(1-&gt;4)-alpha-D-GlcNAc)-L-asparaginyl-[protein] + H2O = an oligosaccharide-(1-&gt;3)-[oligosaccharide-(1-&gt;6)]-beta-D-Man-(1-&gt;4)-D-GlcNAc + N(4)-(N-acetyl-beta-D-glucosaminyl)-L-asparaginyl-[protein]. Its function is as follows. Endoglycosidase that releases N-glycans from glycoproteins by cleaving the beta-1,4-glycosidic bond in the N,N'-diacetylchitobiose core. Involved in the processing of free oligosaccharides in the cytosol. In Homo sapiens (Human), this protein is Cytosolic endo-beta-N-acetylglucosaminidase (ENGASE).